The sequence spans 363 residues: MSHHDPKEALITPGAALSQLNERSRDIFRQIVENYLATGEPVGSRNISRMISVPLSPASVRNVMADLEQLGLIYAPHTSAGRLPTELGLRFFVDALMQVGDLTEDERQSIQAQLAAIGKQQSIEATLSDAMMRLSGLTRAAAVVLTGKSNPRLKHIEFVRLEPEQALVVLVSEDGQIENRVLALPPGVPSSALIEASNFLNSRIRGRTLSEVRGELEAALAQRRSELDQLTQKIIAAGVASWSGGSSDERRLIVRGHANLLEDLHAMEDLERVRLLFDDLETKKGVADLLGLAEQGEGVRIFIGSENKLFSLSGSSTITAPYRDSSGRIVGVLGVIGPTRLNYARVIPMVDYAARIVSQMLGK.

This sequence belongs to the HrcA family.

Its function is as follows. Negative regulator of class I heat shock genes (grpE-dnaK-dnaJ and groELS operons). Prevents heat-shock induction of these operons. This Afipia carboxidovorans (strain ATCC 49405 / DSM 1227 / KCTC 32145 / OM5) (Oligotropha carboxidovorans) protein is Heat-inducible transcription repressor HrcA.